A 79-amino-acid chain; its full sequence is Pyridoxal 5'-phosphate synthase PDX1-like 4 (79 aa).

It belongs to the PdxS/SNZ family.

The chain is Pyridoxal 5'-phosphate synthase PDX1-like 4 (PDX1L4) from Arabidopsis thaliana (Mouse-ear cress).